A 185-amino-acid polypeptide reads, in one-letter code: Translation initiation factor IF-3 (185 aa).

The protein belongs to the IF-3 family. As to quaternary structure, monomer.

It is found in the cytoplasm. Its function is as follows. IF-3 binds to the 30S ribosomal subunit and shifts the equilibrium between 70S ribosomes and their 50S and 30S subunits in favor of the free subunits, thus enhancing the availability of 30S subunits on which protein synthesis initiation begins. This Coxiella burnetii (strain RSA 493 / Nine Mile phase I) protein is Translation initiation factor IF-3.